Here is a 309-residue protein sequence, read N- to C-terminus: Aspartate carbamoyltransferase catalytic subunit (309 aa).

Carbamoyl phosphate-binding residues include Arg-55 and Thr-56. Residue Lys-85 participates in L-aspartate binding. Residues Arg-106, His-135, and Gln-138 each contribute to the carbamoyl phosphate site. 2 residues coordinate L-aspartate: Arg-168 and Arg-230. Residues Leu-268 and Pro-269 each contribute to the carbamoyl phosphate site.

It belongs to the aspartate/ornithine carbamoyltransferase superfamily. ATCase family. Heterododecamer (2C3:3R2) of six catalytic PyrB chains organized as two trimers (C3), and six regulatory PyrI chains organized as three dimers (R2).

The catalysed reaction is carbamoyl phosphate + L-aspartate = N-carbamoyl-L-aspartate + phosphate + H(+). It functions in the pathway pyrimidine metabolism; UMP biosynthesis via de novo pathway; (S)-dihydroorotate from bicarbonate: step 2/3. In terms of biological role, catalyzes the condensation of carbamoyl phosphate and aspartate to form carbamoyl aspartate and inorganic phosphate, the committed step in the de novo pyrimidine nucleotide biosynthesis pathway. This Vibrio vulnificus (strain YJ016) protein is Aspartate carbamoyltransferase catalytic subunit.